A 289-amino-acid polypeptide reads, in one-letter code: Probable endonuclease 4 (289 aa).

Histidine 75, histidine 115, glutamate 153, aspartate 187, histidine 190, histidine 224, aspartate 237, histidine 239, and glutamate 269 together coordinate Zn(2+).

The protein belongs to the AP endonuclease 2 family. The cofactor is Zn(2+).

The enzyme catalyses Endonucleolytic cleavage to 5'-phosphooligonucleotide end-products.. Functionally, endonuclease IV plays a role in DNA repair. It cleaves phosphodiester bonds at apurinic or apyrimidinic (AP) sites, generating a 3'-hydroxyl group and a 5'-terminal sugar phosphate. The polypeptide is Probable endonuclease 4 (Chlamydia caviae (strain ATCC VR-813 / DSM 19441 / 03DC25 / GPIC) (Chlamydophila caviae)).